The following is a 417-amino-acid chain: uncharacterized protein (417 aa).

The protein to M.tuberculosis Rv2067c.

This is an uncharacterized protein from Synechococcus sp. (strain ATCC 27144 / PCC 6301 / SAUG 1402/1) (Anacystis nidulans).